Here is a 582-residue protein sequence, read N- to C-terminus: Arginine--tRNA ligase (582 aa).

The 'HIGH' region signature appears at Pro-128 to His-138.

This sequence belongs to the class-I aminoacyl-tRNA synthetase family. As to quaternary structure, monomer.

The protein localises to the cytoplasm. It catalyses the reaction tRNA(Arg) + L-arginine + ATP = L-arginyl-tRNA(Arg) + AMP + diphosphate. The polypeptide is Arginine--tRNA ligase (Colwellia psychrerythraea (strain 34H / ATCC BAA-681) (Vibrio psychroerythus)).